A 247-amino-acid polypeptide reads, in one-letter code: Ubiquinone biosynthesis O-methyltransferase (247 aa).

Positions 39, 70, 91, and 134 each coordinate S-adenosyl-L-methionine.

It belongs to the methyltransferase superfamily. UbiG/COQ3 family.

The enzyme catalyses a 3-demethylubiquinol + S-adenosyl-L-methionine = a ubiquinol + S-adenosyl-L-homocysteine + H(+). It catalyses the reaction a 3-(all-trans-polyprenyl)benzene-1,2-diol + S-adenosyl-L-methionine = a 2-methoxy-6-(all-trans-polyprenyl)phenol + S-adenosyl-L-homocysteine + H(+). It functions in the pathway cofactor biosynthesis; ubiquinone biosynthesis. O-methyltransferase that catalyzes the 2 O-methylation steps in the ubiquinone biosynthetic pathway. In Cereibacter sphaeroides (strain KD131 / KCTC 12085) (Rhodobacter sphaeroides), this protein is Ubiquinone biosynthesis O-methyltransferase.